Consider the following 256-residue polypeptide: 5-oxoprolinase subunit A (256 aa).

The protein belongs to the LamB/PxpA family. As to quaternary structure, forms a complex composed of PxpA, PxpB and PxpC.

The catalysed reaction is 5-oxo-L-proline + ATP + 2 H2O = L-glutamate + ADP + phosphate + H(+). Its function is as follows. Catalyzes the cleavage of 5-oxoproline to form L-glutamate coupled to the hydrolysis of ATP to ADP and inorganic phosphate. The protein is 5-oxoprolinase subunit A of Cutibacterium acnes (strain DSM 16379 / KPA171202) (Propionibacterium acnes).